Consider the following 1680-residue polypeptide: SWI/SNF chromatin-remodeling complex subunit snf22 (1680 aa).

Disordered regions lie at residues 61–135, 203–258, 274–300, and 367–427; these read QQMR…SQAS, NNSF…HSFS, RRGSIPVNPSTFSASSPPSGSMLASPY, and YVYR…VPPT. Over residues 62 to 91 the composition is skewed to polar residues; that stretch reads QMRNQSSEFPDAENTNLRKQQDTLPTTGFN. Low complexity-rich tracts occupy residues 118–127 and 222–233; these read GNGNVGLNNP and SSLPHSFASPSS. Residues 234–245 show a composition bias toward polar residues; it reads TFEQPHTVQSRA. Low complexity-rich tracts occupy residues 247 to 258, 282 to 299, and 374 to 392; these read SVDTTSSSHSFS, PSTFSASSPPSGSMLASP, and PPSATSFQPSSSRSPSVDP. The span at 406 to 419 shows a compositional bias: polar residues; sequence PSPSASALKTQSHV. Positions 429–465 constitute a QLQ domain; it reads KLNHAQLAMLKSQIVAYNCLNSPNGQVPPAVQQAIFG. Residues 477 to 489 are compositionally biased toward polar residues; sequence SMPFQQNVPQMSS. The tract at residues 477–499 is disordered; sequence SMPFQQNVPQMSSVKKDTPTRDA. Residues 490–499 are compositionally biased toward basic and acidic residues; sequence VKKDTPTRDA. In terms of domain architecture, HSA spans 704-776; it reads QKTEHAMRQK…ARQRLQALRA (73 aa). Polar residues predominate over residues 817 to 832; that stretch reads SNIHSGNTSGKGSNSA. Residues 817–836 are disordered; the sequence is SNIHSGNTSGKGSNSAELEA. The Helicase ATP-binding domain maps to 881–1046; it reads LSLYNNNLNG…WALLNFVLPK (166 aa). 894–901 contacts ATP; it reads DEMGLGKT. Positions 996-999 match the DEGH box motif; sequence DEGH. The 164-residue stretch at 1191–1354 folds into the Helicase C-terminal domain; sequence LLDRILPKLF…STPEEREAFL (164 aa). The interval 1466–1511 is disordered; that stretch reads TVDDPSSTLMPRKRGRPRKKTNSGSSLSTPLSQESSLARSGRKNTP. The segment covering 1476–1486 has biased composition (basic residues); sequence PRKRGRPRKKT. Residues 1488–1502 are compositionally biased toward low complexity; that stretch reads SGSSLSTPLSQESSL. Residues 1513–1623 enclose the Bromo domain; it reads YKQKALRRYC…KTLKEVIEDL (111 aa).

The protein belongs to the SNF2/RAD54 helicase family. In terms of assembly, component of the SWI/SNF global transcription activator complex composed of at least arp9, arp42, snf5, snf22, snf30, sbf59, sol1, ssr1, ssr2, ssr3, ssr4 and tfg3.

The protein resides in the nucleus. Helicase. Component of the SWI/SNF complex, an ATP-dependent chromatin remodeling complex, required for the positive and negative regulation of gene expression of a large number of genes. It changes chromatin structure by altering DNA-histone contacts within a nucleosome, leading eventually to a change in nucleosome position, thus facilitating or repressing binding of gene-specific transcription factors. The polypeptide is SWI/SNF chromatin-remodeling complex subunit snf22 (snf22) (Schizosaccharomyces pombe (strain 972 / ATCC 24843) (Fission yeast)).